The following is a 213-amino-acid chain: Large ribosomal subunit protein uL1 (213 aa).

It belongs to the universal ribosomal protein uL1 family.

The chain is Large ribosomal subunit protein uL1 (RPL10A) from Chlamydomonas reinhardtii (Chlamydomonas smithii).